The following is a 217-amino-acid chain: GRB2-related adapter protein (217 aa).

Positions 1–58 (MESVALYSFQATESDELAFNKGDTLKILNMEDDQNWYKAELRGAEGFVPKNYIRVKPH) constitute an SH3 1 domain. The region spanning 60-152 (WYSGRISRQL…RRQIFLCDEQ (93 aa)) is the SH2 domain. The SH3 2 domain occupies 158 to 217 (SRACFAQAQFDFSAQDPSQLSLRRGDIVEVVEREDPHWWRGRAGGRLGFFPRSYVQPVHL).

The protein belongs to the GRB2/sem-5/DRK family. In terms of assembly, associates through its SH2 domain with ligand-activated receptors for stem cell factor (KIT) and erythropoietin (EPOR). Also forms a stable complex with the Bcr-Abl oncoprotein. GRAP is associated with the Ras guanine nucleotide exchange factor SOS1, primarily through its N-terminal SH3 domain. Interacts with phosphorylated LAT upon TCR activation. Interacts with SHB. Expressed in inner ear, in neruonal fibers innervating cochlear and utricular auditory hair cells (at protein level).

It is found in the membrane. The protein localises to the synapse. Functionally, couples signals from receptor and cytoplasmic tyrosine kinases to the Ras signaling pathway. Plays a role in the inner ear and in hearing. The polypeptide is GRB2-related adapter protein (Mus musculus (Mouse)).